The following is a 32-amino-acid chain: Potassium channel toxin alpha-KTx 10.6 (32 aa).

Cystine bridges form between C3/C22, C8/C27, and C12/C29.

As to expression, expressed by the venom gland.

It localises to the secreted. In terms of biological role, blocks human voltage-gated potassium (Kv) channels Kv1.2/KCNA2 and Kv1.3/KCNA3. Does not block human Kv1.1 at 100nM concentration. The protein is Potassium channel toxin alpha-KTx 10.6 of Centruroides bonito (Scorpion).